The following is a 202-amino-acid chain: Ribonuclease HII (202 aa).

In terms of domain architecture, RNase H type-2 spans 14-202 (LPLAGVDEAG…VAQFSLFPAA (189 aa)). Residues D20, E21, and D111 each contribute to the a divalent metal cation site.

It belongs to the RNase HII family. It depends on Mn(2+) as a cofactor. Mg(2+) is required as a cofactor.

Its subcellular location is the cytoplasm. It catalyses the reaction Endonucleolytic cleavage to 5'-phosphomonoester.. Its function is as follows. Endonuclease that specifically degrades the RNA of RNA-DNA hybrids. The sequence is that of Ribonuclease HII from Rhizorhabdus wittichii (strain DSM 6014 / CCUG 31198 / JCM 15750 / NBRC 105917 / EY 4224 / RW1) (Sphingomonas wittichii).